The sequence spans 642 residues: uncharacterized protein (642 aa).

Mg(2+)-binding residues include E15 and D118. Residues 29-149 (VCVDTCVVID…YNLAKAQGIE (121 aa)) form the PINc domain. The KH domain maps to 510 to 578 (DNSIDLIVPE…ELESTRIYET (69 aa)).

It in the N-terminal section; belongs to the PINc/VapC protein family. The cofactor is Mg(2+).

This is an uncharacterized protein from Methanocaldococcus jannaschii (strain ATCC 43067 / DSM 2661 / JAL-1 / JCM 10045 / NBRC 100440) (Methanococcus jannaschii).